Consider the following 499-residue polypeptide: Serine/threonine-protein kinase SSN3 (499 aa).

A disordered region spans residues 1–21 (MSHSNPPTGASGGPGSASASA). One can recognise a Protein kinase domain in the interval 61–442 (YQVIGFISSG…AAAALQHNFF (382 aa)). Residues 67–75 (ISSGTYGRV) and K91 each bind ATP. D193 functions as the Proton acceptor in the catalytic mechanism. Disordered stretches follow at residues 332–376 (SASG…SAAA) and 463–499 (RRVS…RVKE). The segment covering 365–376 (SSSSANSSSAAA) has biased composition (low complexity). Basic and acidic residues predominate over residues 463–472 (RRVSQEDNDI).

The protein belongs to the protein kinase superfamily. CMGC Ser/Thr protein kinase family. CDC2/CDKX subfamily. In terms of assembly, component of the SRB8-11 complex, a regulatory module of the Mediator complex. It depends on Mg(2+) as a cofactor.

The protein localises to the nucleus. The enzyme catalyses L-seryl-[protein] + ATP = O-phospho-L-seryl-[protein] + ADP + H(+). It carries out the reaction L-threonyl-[protein] + ATP = O-phospho-L-threonyl-[protein] + ADP + H(+). It catalyses the reaction [DNA-directed RNA polymerase] + ATP = phospho-[DNA-directed RNA polymerase] + ADP + H(+). Functionally, component of the SRB8-11 complex. The SRB8-11 complex is a regulatory module of the Mediator complex which is itself involved in regulation of basal and activated RNA polymerase II-dependent transcription. The SRB8-11 complex may be involved in the transcriptional repression of a subset of genes regulated by Mediator. It may inhibit the association of the Mediator complex with RNA polymerase II to form the holoenzyme complex. The SRB8-11 complex phosphorylates the C-terminal domain (CTD) of the largest subunit of RNA polymerase II. The polypeptide is Serine/threonine-protein kinase SSN3 (SSN3) (Pyricularia oryzae (strain 70-15 / ATCC MYA-4617 / FGSC 8958) (Rice blast fungus)).